Here is a 429-residue protein sequence, read N- to C-terminus: Histidinol dehydrogenase (429 aa).

Tyr-127, Gln-188, and Asn-211 together coordinate NAD(+). Residues Ser-234, Gln-256, and His-259 each contribute to the substrate site. Zn(2+) contacts are provided by Gln-256 and His-259. Active-site proton acceptor residues include Glu-324 and His-325. Residues His-325, Asp-358, Glu-412, and His-417 each contribute to the substrate site. Residue Asp-358 participates in Zn(2+) binding. Residue His-417 participates in Zn(2+) binding.

The protein belongs to the histidinol dehydrogenase family. Requires Zn(2+) as cofactor.

The catalysed reaction is L-histidinol + 2 NAD(+) + H2O = L-histidine + 2 NADH + 3 H(+). The protein operates within amino-acid biosynthesis; L-histidine biosynthesis; L-histidine from 5-phospho-alpha-D-ribose 1-diphosphate: step 9/9. Functionally, catalyzes the sequential NAD-dependent oxidations of L-histidinol to L-histidinaldehyde and then to L-histidine. This is Histidinol dehydrogenase from Bacillus thuringiensis subsp. konkukian (strain 97-27).